The chain runs to 846 residues: Enhancer of polycomb-like protein 1 (846 aa).

Disordered regions lie at residues 169–204 (FNSK…KGDA), 391–466 (TSDE…APDA), 587–609 (EKKR…PKAM), 682–702 (AADA…PQPN), and 759–804 (QVQA…GVKQ). Basic and acidic residues predominate over residues 180-203 (VKSDKEQGRGMRVKGKDREKEKGD). The span at 411–426 (PSLSGQTPLTSGQSSS) shows a compositional bias: polar residues. Residues 432–452 (TDKDREERAQRERYDAQRNAE) are compositionally biased toward basic and acidic residues. Residues 434-490 (KDREERAQRERYDAQRNAERSGILSGRSNAPDALKERLQALQQKTEEMLARKKEQDA) adopt a coiled-coil conformation. Positions 686–702 (KPPPAPIFQKPPAPQPN) are enriched in pro residues. The segment covering 759–773 (QVQAQGQGHPQAHLQ) has biased composition (low complexity). Positions 774–796 (THPQGVSQPNGVNSPMPNGQQML) are enriched in polar residues.

Belongs to the enhancer of polycomb family. As to quaternary structure, component of the NuA4 histone acetyltransferase complex.

The protein resides in the nucleus. Its function is as follows. Component of the NuA4 histone acetyltransferase complex which is involved in transcriptional activation of selected genes principally by acetylation of nucleosomal histone H4 and H2A. The NuA4 complex is also involved in DNA repair. Involved in gene silencing by neighboring heterochromatin, blockage of the silencing spreading along the chromosome, and required for cell cycle progression through G2/M. The polypeptide is Enhancer of polycomb-like protein 1 (EPL1) (Cryptococcus neoformans var. neoformans serotype D (strain B-3501A) (Filobasidiella neoformans)).